The following is a 776-amino-acid chain: Kinesin-like protein KLP1 (776 aa).

Residues 5-335 (AVKVFVRTRP…LRFASRVRTL (331 aa)) form the Kinesin motor domain. 91-98 (GQTGAGKT) provides a ligand contact to ATP. Residues 348-371 (ALLLRRYERQIKELKAELAMRDTL) are a coiled coil. The segment at 441–535 (RRATEEGSGA…SNWGDAGPLS (95 aa)) is disordered. Residues 447–460 (GSGAAARGGDSAGP) show a composition bias toward low complexity. Residues 579–657 (ALADTKASIR…SLKSAREELE (79 aa)) are a coiled coil. A globular region spans residues 658 to 776 (PQIQAVAVAR…TQAVNRGLAR (119 aa)).

Belongs to the TRAFAC class myosin-kinesin ATPase superfamily. Kinesin family.

Its subcellular location is the cytoplasm. The protein localises to the cytoskeleton. It is found in the flagellum axoneme. In terms of biological role, may play a role in rotation or twisting of the central pair microtubules of the flagella axoneme. This chain is Kinesin-like protein KLP1 (KLP1), found in Chlamydomonas reinhardtii (Chlamydomonas smithii).